Reading from the N-terminus, the 392-residue chain is Imidazolonepropionase (392 aa).

Fe(3+)-binding residues include H69 and H71. 2 residues coordinate Zn(2+): H69 and H71. Residues R78, Y136, and H163 each contribute to the 4-imidazolone-5-propanoate site. Y136 provides a ligand contact to N-formimidoyl-L-glutamate. H226 lines the Fe(3+) pocket. Residue H226 participates in Zn(2+) binding. Q229 contacts 4-imidazolone-5-propanoate. Residue D302 coordinates Fe(3+). D302 serves as a coordination point for Zn(2+). N-formimidoyl-L-glutamate is bound by residues N304 and G306. S307 provides a ligand contact to 4-imidazolone-5-propanoate.

Belongs to the metallo-dependent hydrolases superfamily. HutI family. Zn(2+) serves as cofactor. The cofactor is Fe(3+).

Its subcellular location is the cytoplasm. It catalyses the reaction 4-imidazolone-5-propanoate + H2O = N-formimidoyl-L-glutamate. The protein operates within amino-acid degradation; L-histidine degradation into L-glutamate; N-formimidoyl-L-glutamate from L-histidine: step 3/3. Functionally, catalyzes the hydrolytic cleavage of the carbon-nitrogen bond in imidazolone-5-propanoate to yield N-formimidoyl-L-glutamate. It is the third step in the universal histidine degradation pathway. This chain is Imidazolonepropionase, found in Salinispora tropica (strain ATCC BAA-916 / DSM 44818 / JCM 13857 / NBRC 105044 / CNB-440).